The primary structure comprises 79 residues: ATP synthase subunit c (79 aa).

2 helical membrane passes run 11–31 (MAAA…IGIL) and 53–73 (FFIV…LGLY).

It belongs to the ATPase C chain family. F-type ATPases have 2 components, F(1) - the catalytic core - and F(0) - the membrane proton channel. F(1) has five subunits: alpha(3), beta(3), gamma(1), delta(1), epsilon(1). F(0) has three main subunits: a(1), b(2) and c(10-14). The alpha and beta chains form an alternating ring which encloses part of the gamma chain. F(1) is attached to F(0) by a central stalk formed by the gamma and epsilon chains, while a peripheral stalk is formed by the delta and b chains.

The protein resides in the cell inner membrane. In terms of biological role, f(1)F(0) ATP synthase produces ATP from ADP in the presence of a proton or sodium gradient. F-type ATPases consist of two structural domains, F(1) containing the extramembraneous catalytic core and F(0) containing the membrane proton channel, linked together by a central stalk and a peripheral stalk. During catalysis, ATP synthesis in the catalytic domain of F(1) is coupled via a rotary mechanism of the central stalk subunits to proton translocation. Functionally, key component of the F(0) channel; it plays a direct role in translocation across the membrane. A homomeric c-ring of between 10-14 subunits forms the central stalk rotor element with the F(1) delta and epsilon subunits. This is ATP synthase subunit c from Pectobacterium atrosepticum (strain SCRI 1043 / ATCC BAA-672) (Erwinia carotovora subsp. atroseptica).